Reading from the N-terminus, the 394-residue chain is GDSL esterase/lipase At1g31550 (394 aa).

Positions 1–27 (MASLDSHVLMKLGSLFLSTLFVSIVSS) are cleaved as a signal peptide. Ser43 acts as the Nucleophile in catalysis. Asn138, Asn290, and Asn322 each carry an N-linked (GlcNAc...) asparagine glycan. Residues Asp345 and His348 contribute to the active site.

It belongs to the 'GDSL' lipolytic enzyme family.

It is found in the secreted. This is GDSL esterase/lipase At1g31550 from Arabidopsis thaliana (Mouse-ear cress).